Reading from the N-terminus, the 140-residue chain is MMDVEQVKEIIPHRYPFLLVDKVVEIQEGEKVTALKNVSVNEPFFQGHFPEYPVMPGVLILEALAQTGAIAVLNIEENKGKIGFLAGVDKCRFKRQVKPGDQLNLQVEIIRMKGPIGKGKGIATVDGEVACEAEITFAIK.

Residue H48 is part of the active site.

It belongs to the thioester dehydratase family. FabZ subfamily.

The protein resides in the cytoplasm. It carries out the reaction a (3R)-hydroxyacyl-[ACP] = a (2E)-enoyl-[ACP] + H2O. Functionally, involved in unsaturated fatty acids biosynthesis. Catalyzes the dehydration of short chain beta-hydroxyacyl-ACPs and long chain saturated and unsaturated beta-hydroxyacyl-ACPs. This is 3-hydroxyacyl-[acyl-carrier-protein] dehydratase FabZ from Oceanobacillus iheyensis (strain DSM 14371 / CIP 107618 / JCM 11309 / KCTC 3954 / HTE831).